Consider the following 399-residue polypeptide: uncharacterized protein (399 aa).

10 helical membrane passes run 7 to 27 (FSAL…LYLI), 33 to 53 (FLQI…FEVP), 79 to 99 (AFFP…IWAL), 131 to 151 (LLIT…SLNI), 153 to 173 (FPFL…SVFI), 208 to 228 (VLLI…ISRY), 242 to 262 (SLGY…TLTI), 296 to 316 (PLGI…HPIV), 335 to 355 (LNSG…GIIS), and 357 to 377 (AFGL…PIIL).

This sequence belongs to the major facilitator superfamily. Drug:H(+) antiporter-3 (DHA3) (TC 2.A.1.21) family.

It is found in the cell membrane. This is an uncharacterized protein from Bacillus subtilis (strain 168).